The primary structure comprises 254 residues: Adenosine 5'-phosphosulfate reductase (254 aa).

[4Fe-4S] cluster is bound by residues Cys-131, Cys-132, Cys-212, and Cys-215. Cys-238 acts as the Nucleophile; cysteine thiosulfonate intermediate in catalysis.

This sequence belongs to the PAPS reductase family. CysH subfamily. Requires [4Fe-4S] cluster as cofactor.

It localises to the cytoplasm. The catalysed reaction is [thioredoxin]-disulfide + sulfite + AMP + 2 H(+) = adenosine 5'-phosphosulfate + [thioredoxin]-dithiol. It participates in sulfur metabolism; hydrogen sulfide biosynthesis; sulfite from sulfate. Functionally, catalyzes the formation of sulfite from adenosine 5'-phosphosulfate (APS) using thioredoxin as an electron donor. This chain is Adenosine 5'-phosphosulfate reductase, found in Mesorhizobium japonicum (strain LMG 29417 / CECT 9101 / MAFF 303099) (Mesorhizobium loti (strain MAFF 303099)).